The following is a 235-amino-acid chain: Ubiquinone biosynthesis O-methyltransferase (235 aa).

4 residues coordinate S-adenosyl-L-methionine: Arg-39, Gly-59, Asp-80, and Met-124.

The protein belongs to the methyltransferase superfamily. UbiG/COQ3 family.

The enzyme catalyses a 3-demethylubiquinol + S-adenosyl-L-methionine = a ubiquinol + S-adenosyl-L-homocysteine + H(+). It catalyses the reaction a 3-(all-trans-polyprenyl)benzene-1,2-diol + S-adenosyl-L-methionine = a 2-methoxy-6-(all-trans-polyprenyl)phenol + S-adenosyl-L-homocysteine + H(+). It functions in the pathway cofactor biosynthesis; ubiquinone biosynthesis. Its function is as follows. O-methyltransferase that catalyzes the 2 O-methylation steps in the ubiquinone biosynthetic pathway. This Vibrio campbellii (strain ATCC BAA-1116) protein is Ubiquinone biosynthesis O-methyltransferase.